A 114-amino-acid polypeptide reads, in one-letter code: Large ribosomal subunit protein uL22 (114 aa).

It belongs to the universal ribosomal protein uL22 family. As to quaternary structure, part of the 50S ribosomal subunit.

Its function is as follows. This protein binds specifically to 23S rRNA; its binding is stimulated by other ribosomal proteins, e.g. L4, L17, and L20. It is important during the early stages of 50S assembly. It makes multiple contacts with different domains of the 23S rRNA in the assembled 50S subunit and ribosome. In terms of biological role, the globular domain of the protein is located near the polypeptide exit tunnel on the outside of the subunit, while an extended beta-hairpin is found that lines the wall of the exit tunnel in the center of the 70S ribosome. This Ehrlichia ruminantium (strain Gardel) protein is Large ribosomal subunit protein uL22.